Here is a 208-residue protein sequence, read N- to C-terminus: Methylthioribulose-1-phosphate dehydratase (208 aa).

Histidine 99 and histidine 101 together coordinate Zn(2+).

It belongs to the aldolase class II family. MtnB subfamily. Zn(2+) is required as a cofactor.

The catalysed reaction is 5-(methylsulfanyl)-D-ribulose 1-phosphate = 5-methylsulfanyl-2,3-dioxopentyl phosphate + H2O. It participates in amino-acid biosynthesis; L-methionine biosynthesis via salvage pathway; L-methionine from S-methyl-5-thio-alpha-D-ribose 1-phosphate: step 2/6. Functionally, catalyzes the dehydration of methylthioribulose-1-phosphate (MTRu-1-P) into 2,3-diketo-5-methylthiopentyl-1-phosphate (DK-MTP-1-P). The protein is Methylthioribulose-1-phosphate dehydratase of Aquifex aeolicus (strain VF5).